A 400-amino-acid chain; its full sequence is Serine/threonine transporter SstT (400 aa).

9 helical membrane-spanning segments follow: residues 14–34 (IIIAIILGIGVALLFPTVTPY), 48–68 (SVAPILVFVLVLSSIANFQVG), 76–96 (VLLLYVVGMLLAAFSAVIASL), 136–156 (AISEANFIGILAWAIGLGLAM), 177–197 (IIHKVIAFAPVGIFGLVAVTF), 211–231 (LLAVLLGTMLFVALVINPILV), 285–305 (IPLGATVNMAGAAVTITVLTL), 311–331 (LGIHVDLATMIILSVVATISA), and 349–371 (CSLFGISSEIAMQVVAVGMIISV).

Belongs to the dicarboxylate/amino acid:cation symporter (DAACS) (TC 2.A.23) family.

The protein localises to the cell inner membrane. It carries out the reaction L-serine(in) + Na(+)(in) = L-serine(out) + Na(+)(out). The catalysed reaction is L-threonine(in) + Na(+)(in) = L-threonine(out) + Na(+)(out). Its function is as follows. Involved in the import of serine and threonine into the cell, with the concomitant import of sodium (symport system). This is Serine/threonine transporter SstT from Acinetobacter baumannii (strain ATCC 17978 / DSM 105126 / CIP 53.77 / LMG 1025 / NCDC KC755 / 5377).